Here is a 37-residue protein sequence, read N- to C-terminus: Large ribosomal subunit protein bL36c (37 aa).

The protein belongs to the bacterial ribosomal protein bL36 family.

It is found in the plastid. It localises to the organellar chromatophore. The protein is Large ribosomal subunit protein bL36c of Paulinella chromatophora.